Consider the following 464-residue polypeptide: CD-NTase-associated protein 4 (464 aa).

An N-terminal endonuclease domain region spans residues 1-228; the sequence is MSASLLEKQS…FENFICHALE (228 aa). The C-terminal SAVED domain stretch occupies residues 229-464; the sequence is EDRTQWLSDP…EYMPTAELNI (236 aa).

It belongs to the Cap4 nuclease family. A monomer in the absence of cAAA, in its presence it forms oligomers.

With respect to regulation, DNase activity is activated upon ligand binding. Functionally, effector DNase of a CBASS antivirus system. CBASS (cyclic oligonucleotide-based antiphage signaling system) provides immunity against bacteriophage. The CD-NTase protein synthesizes cyclic nucleotides in response to infection; these serve as specific second messenger signals. The signals activate a diverse range of effectors, leading to bacterial cell death and thus abortive phage infection. A type II-C CBASS system. In terms of biological role, probably in the presence of its endogenous cyclic nucleotide (synthesized by the cognate CD-NTase protein in the CBASS operon), or of 2',3',3'-cyclic AMP-AMP-AMP (cAAA) synthesized by Acinetobacter sp. ATCC 27244, endonucleolytically degrades dsDNA in a non-sequence specific manner. It is not activated by other cyclic nucleotides. The chain is CD-NTase-associated protein 4 from Moraxella osloensis.